Consider the following 230-residue polypeptide: Ribonuclease 3 (230 aa).

An RNase III domain is found at 1–134 (MKQLEELLST…FLGALLLDKG (134 aa)). Residue Glu47 coordinates Mg(2+). Asp51 is an active-site residue. Residues Asp120 and Glu123 each contribute to the Mg(2+) site. Glu123 is a catalytic residue. The 70-residue stretch at 160–229 (DYKTCLQEFL…AKNALAQLSE (70 aa)) folds into the DRBM domain.

Belongs to the ribonuclease III family. Homodimer. Requires Mg(2+) as cofactor.

It localises to the cytoplasm. The enzyme catalyses Endonucleolytic cleavage to 5'-phosphomonoester.. Functionally, digests double-stranded RNA. Involved in the processing of primary rRNA transcript to yield the immediate precursors to the large and small rRNAs (23S and 16S). Processes some mRNAs, and tRNAs when they are encoded in the rRNA operon. Processes pre-crRNA and tracrRNA of type II CRISPR loci if present in the organism. This chain is Ribonuclease 3, found in Streptococcus pyogenes serotype M28 (strain MGAS6180).